The sequence spans 22 residues: Myofibril-bound serine protease (22 aa).

The region spanning 1 to 22 (IVGGYECEAYSKPYQVSINLGY) is the Peptidase S1 domain.

The protein belongs to the peptidase S1 family. Detected in skeletal muscle (at protein level).

The protein resides in the cytoplasm. Serine protease which degrades the myosin heavy chain and tropomyosin, but not actin. Selectively cleaves Arg-|-Xaa bonds. This is Myofibril-bound serine protease from Saurida undosquamis (Brushtooth lizardfish).